A 407-amino-acid polypeptide reads, in one-letter code: Venom metalloproteinase 3 (407 aa).

N-linked (GlcNAc...) asparagine glycosylation is found at Asn-42, Asn-91, Asn-126, and Asn-166. In terms of domain architecture, Peptidase M12B spans 191–405 (FYPKLLVLVD…TSAACLKDTY (215 aa)). 2 disulfides stabilise this stretch: Cys-317-Cys-400 and Cys-356-Cys-384. His-340 contributes to the Zn(2+) binding site. Residue Glu-341 is part of the active site. Zn(2+)-binding residues include His-344 and His-350. A glycan (N-linked (GlcNAc...) asparagine) is linked at Asn-391.

This sequence in the C-terminal section; belongs to the venom metalloproteinase (M12B) family. As to quaternary structure, monomer. Zn(2+) is required as a cofactor. In terms of tissue distribution, expressed by the venom gland.

The protein localises to the secreted. The gelatinase activity is inhibited by EDTA. In terms of biological role, the recombinant protein has gelatinase activity. In vivo, injection of this recombinant into fifth instar L.oleracea (host) larvae results in partial insect mortality associated with the molt to sixth instar, with surviving insects showing retarded development and growth. This is Venom metalloproteinase 3 from Eulophus pennicornis (Parasitoid wasp).